The primary structure comprises 131 residues: Modulator protein MzrA (131 aa).

Residues methionine 1–lysine 14 lie on the Cytoplasmic side of the membrane. The helical transmembrane segment at valine 15–glutamine 31 threads the bilayer. At serine 32 to glycine 131 the chain is on the periplasmic side.

Belongs to the MzrA family. As to quaternary structure, interacts with EnvZ.

The protein resides in the cell inner membrane. Its function is as follows. Modulates the activity of the EnvZ/OmpR two-component regulatory system, probably by directly modulating EnvZ enzymatic activity and increasing stability of phosphorylated OmpR. The polypeptide is Modulator protein MzrA (Pectobacterium carotovorum subsp. carotovorum (strain PC1)).